A 204-amino-acid polypeptide reads, in one-letter code: Holliday junction branch migration complex subunit RuvA (204 aa).

Residues 1–64 are domain I; the sequence is MIGRLQGKLI…EDAHLLFGFS (64 aa). The segment at 65–143 is domain II; sequence TKTDRTLFRE…GLRQPDFFVE (79 aa). The tract at residues 144–155 is flexible linker; sequence SKHITVPDIVSA. Residues 156–204 form a domain III region; that stretch reads EKETPNDEAVAALVALGYKPPEAAKMVKKVANGDLTSEQLIREALKAAL.

This sequence belongs to the RuvA family. Homotetramer. Forms an RuvA(8)-RuvB(12)-Holliday junction (HJ) complex. HJ DNA is sandwiched between 2 RuvA tetramers; dsDNA enters through RuvA and exits via RuvB. An RuvB hexamer assembles on each DNA strand where it exits the tetramer. Each RuvB hexamer is contacted by two RuvA subunits (via domain III) on 2 adjacent RuvB subunits; this complex drives branch migration. In the full resolvosome a probable DNA-RuvA(4)-RuvB(12)-RuvC(2) complex forms which resolves the HJ.

The protein resides in the cytoplasm. In terms of biological role, the RuvA-RuvB-RuvC complex processes Holliday junction (HJ) DNA during genetic recombination and DNA repair, while the RuvA-RuvB complex plays an important role in the rescue of blocked DNA replication forks via replication fork reversal (RFR). RuvA specifically binds to HJ cruciform DNA, conferring on it an open structure. The RuvB hexamer acts as an ATP-dependent pump, pulling dsDNA into and through the RuvAB complex. HJ branch migration allows RuvC to scan DNA until it finds its consensus sequence, where it cleaves and resolves the cruciform DNA. The protein is Holliday junction branch migration complex subunit RuvA of Actinobacillus succinogenes (strain ATCC 55618 / DSM 22257 / CCUG 43843 / 130Z).